Reading from the N-terminus, the 140-residue chain is Cytochrome c-type biogenesis protein CcmE (140 aa).

Topologically, residues 1-7 (MKRKHKR) are cytoplasmic. Residues 8–28 (LLFVLASFCAAGCALLFILSE) traverse the membrane as a helical; Signal-anchor for type II membrane protein segment. At 29 to 140 (LRESVSFFYT…TIPKALPEPK (112 aa)) the chain is on the periplasmic side. Heme contacts are provided by histidine 121 and tyrosine 125.

It belongs to the CcmE/CycJ family.

The protein localises to the cell inner membrane. In terms of biological role, heme chaperone required for the biogenesis of c-type cytochromes. Transiently binds heme delivered by CcmC and transfers the heme to apo-cytochromes in a process facilitated by CcmF and CcmH. The protein is Cytochrome c-type biogenesis protein CcmE of Anaplasma marginale (strain Florida).